Reading from the N-terminus, the 399-residue chain is MSFYSNLPSAGQSSRGSSTSGRNGVGLEPLYPTIFEIMSSQEIDSLLPASIRYLLANHLVANFPNRYTLRLNKYFFEWFQAIKGFVEWYHLKTYNSTFIDRFYGLQLFSSRDRNLALTQCLNPKGQSEWPQGLQLNQQQKSVIFLEKIILPYITAKLDEILEKISMNNIFSSDETENKWPKRAFLRIYPFIKKLLALSNLLVKLLFLTKRTGSVSLLQYLFKIEYTTVRPLSSELSGLKETKGMDNRLRKTNISSIFALMQGQLSIIPRFLTFMGSQFFPTFIFVLRVYQWWTTQDMTTKLQKRVNDLDEDIPRPPFSSHSDKTEDKEGVSEACPVCEKTVQNPCVLETGYVACYPCAISYLVNNEGHCPVTNKKLLGCTYNKHTNKWEVVTGIRKLLI.

Positions 1–24 (MSFYSNLPSAGQSSRGSSTSGRNG) are disordered. Residues 1-33 (MSFYSNLPSAGQSSRGSSTSGRNGVGLEPLYPT) are Peroxisomal matrix-facing. A compositionally biased stretch (low complexity) spans 9 to 24 (SAGQSSRGSSTSGRNG). The helical transmembrane segment at 34–62 (IFEIMSSQEIDSLLPASIRYLLANHLVAN) threads the bilayer. Residues 63–67 (FPNRY) lie on the Cytoplasmic side of the membrane. A helical membrane pass occupies residues 68–92 (TLRLNKYFFEWFQAIKGFVEWYHLK). Residues 93 to 136 (TYNSTFIDRFYGLQLFSSRDRNLALTQCLNPKGQSEWPQGLQLN) lie on the Peroxisomal matrix side of the membrane. The helical transmembrane segment at 137–168 (QQQKSVIFLEKIILPYITAKLDEILEKISMNN) threads the bilayer. Residues 169 to 171 (IFS) lie on the Cytoplasmic side of the membrane. The chain crosses the membrane as a helical span at residues 172-208 (SDETENKWPKRAFLRIYPFIKKLLALSNLLVKLLFLT). Over 209–277 (KRTGSVSLLQ…PRFLTFMGSQ (69 aa)) the chain is Peroxisomal matrix. A helical transmembrane segment spans residues 278-305 (FFPTFIFVLRVYQWWTTQDMTTKLQKRV). Residues 306–399 (NDLDEDIPRP…VVTGIRKLLI (94 aa)) lie on the Cytoplasmic side of the membrane. The Zn(2+) site is built by cysteine 334, cysteine 337, cysteine 354, and cysteine 357. The segment at 334 to 373 (CPVCEKTVQNPCVLETGYVACYPCAISYLVNNEGHCPVTN) adopts an RING-type; degenerate zinc-finger fold.

Belongs to the pex2/pex10/pex12 family. Component of the PEX2-PEX10-PEX12 retrotranslocation channel, composed of PEX2, PEX10 and PEX12.

The protein resides in the peroxisome membrane. The protein operates within protein modification; protein ubiquitination. Functionally, component of a retrotranslocation channel required for peroxisome organization by mediating export of the PEX5 receptor from peroxisomes to the cytosol, thereby promoting PEX5 recycling. The retrotranslocation channel is composed of PEX2, PEX10 and PEX12; each subunit contributing transmembrane segments that coassemble into an open channel that specifically allows the passage of PEX5 through the peroxisomal membrane. PEX12 also regulates PEX5 recycling by activating the E3 ubiquitin-protein ligase activity of PEX10. When PEX5 recycling is compromised, PEX12 stimulates PEX10-mediated polyubiquitination of PEX5, leading to its subsequent degradation. The sequence is that of Peroxisome assembly protein 12 from Saccharomyces cerevisiae (strain ATCC 204508 / S288c) (Baker's yeast).